The following is a 57-amino-acid chain: Large ribosomal subunit protein eL37 (57 aa).

Cys20, Cys23, Cys35, and Cys38 together coordinate Zn(2+). The C4-type zinc-finger motif lies at 20–38 (CRRCGEKSYHKQKKVCASC).

Belongs to the eukaryotic ribosomal protein eL37 family. The cofactor is Zn(2+).

Functionally, binds to the 23S rRNA. The protein is Large ribosomal subunit protein eL37 of Natronomonas pharaonis (strain ATCC 35678 / DSM 2160 / CIP 103997 / JCM 8858 / NBRC 14720 / NCIMB 2260 / Gabara) (Halobacterium pharaonis).